A 249-amino-acid polypeptide reads, in one-letter code: Enolase-phosphatase E1 (249 aa).

It belongs to the HAD-like hydrolase superfamily. MasA/MtnC family. In terms of assembly, monomer. Mg(2+) is required as a cofactor.

It catalyses the reaction 5-methylsulfanyl-2,3-dioxopentyl phosphate + H2O = 1,2-dihydroxy-5-(methylsulfanyl)pent-1-en-3-one + phosphate. It participates in amino-acid biosynthesis; L-methionine biosynthesis via salvage pathway; L-methionine from S-methyl-5-thio-alpha-D-ribose 1-phosphate: step 3/6. Its pathway is amino-acid biosynthesis; L-methionine biosynthesis via salvage pathway; L-methionine from S-methyl-5-thio-alpha-D-ribose 1-phosphate: step 4/6. Functionally, bifunctional enzyme that catalyzes the enolization of 2,3-diketo-5-methylthiopentyl-1-phosphate (DK-MTP-1-P) into the intermediate 2-hydroxy-3-keto-5-methylthiopentenyl-1-phosphate (HK-MTPenyl-1-P), which is then dephosphorylated to form the acireductone 1,2-dihydroxy-3-keto-5-methylthiopentene (DHK-MTPene). The polypeptide is Enolase-phosphatase E1 (Synechococcus sp. (strain CC9605)).